A 338-amino-acid chain; its full sequence is Anthranilate phosphoribosyltransferase (338 aa).

Residues G80, 83 to 84, T88, 90 to 93, 108 to 116, and S120 each bind 5-phospho-alpha-D-ribose 1-diphosphate; these read GD, NIST, and KHGNRAVSS. Residue G80 participates in anthranilate binding. S92 is a binding site for Mg(2+). An anthranilate-binding site is contributed by N111. R166 is an anthranilate binding site. Residues D225 and E226 each coordinate Mg(2+).

Belongs to the anthranilate phosphoribosyltransferase family. As to quaternary structure, homodimer. Mg(2+) is required as a cofactor.

The catalysed reaction is N-(5-phospho-beta-D-ribosyl)anthranilate + diphosphate = 5-phospho-alpha-D-ribose 1-diphosphate + anthranilate. The protein operates within amino-acid biosynthesis; L-tryptophan biosynthesis; L-tryptophan from chorismate: step 2/5. In terms of biological role, catalyzes the transfer of the phosphoribosyl group of 5-phosphorylribose-1-pyrophosphate (PRPP) to anthranilate to yield N-(5'-phosphoribosyl)-anthranilate (PRA). This Thermoanaerobacter sp. (strain X514) protein is Anthranilate phosphoribosyltransferase.